The sequence spans 294 residues: Lipoyl synthase (294 aa).

7 residues coordinate [4Fe-4S] cluster: Cys35, Cys40, Cys46, Cys61, Cys65, Cys68, and Ser273. A Radical SAM core domain is found at 47–262; it reads FRQRQATFLI…REQALSMGFE (216 aa).

The protein belongs to the radical SAM superfamily. Lipoyl synthase family. [4Fe-4S] cluster is required as a cofactor.

The protein localises to the cytoplasm. It catalyses the reaction [[Fe-S] cluster scaffold protein carrying a second [4Fe-4S](2+) cluster] + N(6)-octanoyl-L-lysyl-[protein] + 2 oxidized [2Fe-2S]-[ferredoxin] + 2 S-adenosyl-L-methionine + 4 H(+) = [[Fe-S] cluster scaffold protein] + N(6)-[(R)-dihydrolipoyl]-L-lysyl-[protein] + 4 Fe(3+) + 2 hydrogen sulfide + 2 5'-deoxyadenosine + 2 L-methionine + 2 reduced [2Fe-2S]-[ferredoxin]. Its pathway is protein modification; protein lipoylation via endogenous pathway; protein N(6)-(lipoyl)lysine from octanoyl-[acyl-carrier-protein]: step 2/2. Its function is as follows. Catalyzes the radical-mediated insertion of two sulfur atoms into the C-6 and C-8 positions of the octanoyl moiety bound to the lipoyl domains of lipoate-dependent enzymes, thereby converting the octanoylated domains into lipoylated derivatives. This Geotalea daltonii (strain DSM 22248 / JCM 15807 / FRC-32) (Geobacter daltonii) protein is Lipoyl synthase.